A 454-amino-acid polypeptide reads, in one-letter code: Cathepsin C (454 aa).

The N-terminal stretch at 1–20 (MHWVFHCILIILACLRFTCA) is a signal peptide. A propeptide spanning residues 21-217 (DTPANCTYED…SKELISLTGN (197 aa)) is cleaved from the precursor. Residue N25 is glycosylated (N-linked (GlcNAc...) asparagine). Disulfide bonds link C26/C107, C244/C287, and C280/C321. C247 is an active-site residue. A glycan (N-linked (GlcNAc...) asparagine) is linked at N265. F291 is a binding site for chloride. N-linked (GlcNAc...) asparagine glycosylation occurs at N326. Y337 is a binding site for chloride. Catalysis depends on residues H398 and N420.

The protein belongs to the peptidase C1 family. Chloride is required as a cofactor.

The protein resides in the lysosome. Functionally, thiol protease. Has a role as a digestive enzyme. This Schistosoma mansoni (Blood fluke) protein is Cathepsin C.